Consider the following 237-residue polypeptide: Methylthioribulose-1-phosphate dehydratase (237 aa).

Cysteine 98 contacts substrate. The Zn(2+) site is built by histidine 116 and histidine 118. Catalysis depends on glutamate 140, which acts as the Proton donor/acceptor. Histidine 196 serves as a coordination point for Zn(2+).

This sequence belongs to the aldolase class II family. MtnB subfamily. It depends on Zn(2+) as a cofactor.

It localises to the cytoplasm. It catalyses the reaction 5-(methylsulfanyl)-D-ribulose 1-phosphate = 5-methylsulfanyl-2,3-dioxopentyl phosphate + H2O. It participates in amino-acid biosynthesis; L-methionine biosynthesis via salvage pathway; L-methionine from S-methyl-5-thio-alpha-D-ribose 1-phosphate: step 2/6. Functionally, catalyzes the dehydration of methylthioribulose-1-phosphate (MTRu-1-P) into 2,3-diketo-5-methylthiopentyl-1-phosphate (DK-MTP-1-P). The protein is Methylthioribulose-1-phosphate dehydratase of Laccaria bicolor (strain S238N-H82 / ATCC MYA-4686) (Bicoloured deceiver).